A 707-amino-acid polypeptide reads, in one-letter code: E3 ubiquitin-protein ligase Praja-2 (707 aa).

A compositionally biased stretch (basic and acidic residues) spans 1-10 (MSQYTEKEPS). 3 disordered regions span residues 1-23 (MSQYTEKEPSVMDQDSSKAAWPR), 75-120 (NTAG…PSVA), and 242-290 (AGDA…CVPG). Position 2 is an N-acetylserine (serine 2). Residues 109-119 (LNQSTESNPSV) show a composition bias toward polar residues. Residues 246-276 (EAVHQDGQEFQRSSEDGIVRKRRQDDTDQGR) show a composition bias toward basic and acidic residues. Residues serine 306 and serine 320 each carry the phosphoserine modification. Phosphoserine; by PKA is present on serine 339. Disordered regions lie at residues 380–403 (VTPREAERHRATAENGATASGRQE) and 424–493 (EDSS…QTSL). Positions 381–391 (TPREAERHRAT) are enriched in basic and acidic residues. Position 430 is a phosphoserine (serine 430). Residues 465-481 (NEPELQSDSSGPEEENQ) show a composition bias toward acidic residues. Residues 482-491 (ELSLQEGEQT) show a composition bias toward polar residues. The interval 530–707 (DGNNNLEDDS…PANDNAEEAP (178 aa)) is interaction with PRKAR1A, PRKAR2A and PRKAR2B. Residues 549–569 (WSLFDGFADGLGVAEAISYVD) form a mediates interaction with TBC1D31 region. Residues 633–674 (CPICCSEYIKDDIATELPCHHFFHKPCVSIWLQKSGTCPVCR) form an RING-type; atypical zinc finger. The tract at residues 686 to 707 (AAASSEPDLDASPANDNAEEAP) is disordered.

In terms of assembly, binds ubiquitin-conjugating enzymes (E2s). In vitro, interacts with the ubiquitin-conjugating enzyme, UBE2D2. The phosphorylated form interacts with PRKAR1A, PRKAR2A and PRKAR2B. Binds the catalytic subunits of cAMP-dependent protein kinase. Interacts with MFHAS1. Interacts with TBC1D31; the interaction is direct and recruits PJA2 to centrosomes. In terms of tissue distribution, highly expressed in the brain, in nerve cells but not in glial cells. Abundantly expressed in pyramidal neurons and in the CA3 region of apical dendrites. Colocalizes with PRKAR2B in dentate granule cells and at postsynaptic sites of primary hippocampal neurons.

The protein localises to the cytoplasm. It is found in the cell membrane. It localises to the endoplasmic reticulum membrane. The protein resides in the golgi apparatus membrane. Its subcellular location is the synapse. The protein localises to the postsynaptic density. It is found in the cytoskeleton. It localises to the microtubule organizing center. The protein resides in the centrosome. It carries out the reaction S-ubiquitinyl-[E2 ubiquitin-conjugating enzyme]-L-cysteine + [acceptor protein]-L-lysine = [E2 ubiquitin-conjugating enzyme]-L-cysteine + N(6)-ubiquitinyl-[acceptor protein]-L-lysine.. The protein operates within protein modification; protein ubiquitination. Functionally, has E2-dependent E3 ubiquitin-protein ligase activity. Responsible for ubiquitination of cAMP-dependent protein kinase type I and type II-alpha/beta regulatory subunits and for targeting them for proteasomal degradation. Essential for PKA-mediated long-term memory processes. Through the ubiquitination of MFHAS1, positively regulates the TLR2 signaling pathway that leads to the activation of the downstream p38 and JNK MAP kinases and promotes the polarization of macrophages toward the pro-inflammatory M1 phenotype. Plays a role in ciliogenesis by ubiquitinating OFD1. The sequence is that of E3 ubiquitin-protein ligase Praja-2 (Pja2) from Rattus norvegicus (Rat).